A 358-amino-acid polypeptide reads, in one-letter code: Biotin synthase (358 aa).

The region spanning 50 to 277 is the Radical SAM core domain; that stretch reads NEVQVSTLCS…KSHVRLSAGR (228 aa). [4Fe-4S] cluster-binding residues include C65, C69, and C72. Residues C109, C140, C200, and R272 each coordinate [2Fe-2S] cluster.

Belongs to the radical SAM superfamily. Biotin synthase family. Homodimer. [4Fe-4S] cluster is required as a cofactor. The cofactor is [2Fe-2S] cluster.

It catalyses the reaction (4R,5S)-dethiobiotin + (sulfur carrier)-SH + 2 reduced [2Fe-2S]-[ferredoxin] + 2 S-adenosyl-L-methionine = (sulfur carrier)-H + biotin + 2 5'-deoxyadenosine + 2 L-methionine + 2 oxidized [2Fe-2S]-[ferredoxin]. It functions in the pathway cofactor biosynthesis; biotin biosynthesis; biotin from 7,8-diaminononanoate: step 2/2. Functionally, catalyzes the conversion of dethiobiotin (DTB) to biotin by the insertion of a sulfur atom into dethiobiotin via a radical-based mechanism. In Cellvibrio japonicus (strain Ueda107) (Pseudomonas fluorescens subsp. cellulosa), this protein is Biotin synthase.